Here is a 443-residue protein sequence, read N- to C-terminus: tRNA-2-methylthio-N(6)-dimethylallyladenosine synthase (443 aa).

The MTTase N-terminal domain occupies 3–120 (SKLYIRTFGC…LPDLIDARRR (118 aa)). 6 residues coordinate [4Fe-4S] cluster: cysteine 12, cysteine 49, cysteine 83, cysteine 157, cysteine 161, and cysteine 164. Residues 143 to 375 (RTEGSTAFVS…QEKIQLNAQA (233 aa)) form the Radical SAM core domain. The region spanning 378–441 (QGMVDTVQRI…SHTLRGEISD (64 aa)) is the TRAM domain.

It belongs to the methylthiotransferase family. MiaB subfamily. In terms of assembly, monomer. The cofactor is [4Fe-4S] cluster.

It is found in the cytoplasm. The catalysed reaction is N(6)-dimethylallyladenosine(37) in tRNA + (sulfur carrier)-SH + AH2 + 2 S-adenosyl-L-methionine = 2-methylsulfanyl-N(6)-dimethylallyladenosine(37) in tRNA + (sulfur carrier)-H + 5'-deoxyadenosine + L-methionine + A + S-adenosyl-L-homocysteine + 2 H(+). In terms of biological role, catalyzes the methylthiolation of N6-(dimethylallyl)adenosine (i(6)A), leading to the formation of 2-methylthio-N6-(dimethylallyl)adenosine (ms(2)i(6)A) at position 37 in tRNAs that read codons beginning with uridine. In Nitrosomonas europaea (strain ATCC 19718 / CIP 103999 / KCTC 2705 / NBRC 14298), this protein is tRNA-2-methylthio-N(6)-dimethylallyladenosine synthase.